The primary structure comprises 467 residues: MSKGTLFDKVWDLHTVGTLPSGLTQLFIGLHLIHEVTSPQAFAMLRERGLKVLFPERTVATVDHIVPTENQARPFVDSLAEEMIQALENNCQENNITFYNIGSGSQGIVHVIAPELGLTQPGMTIACGDSHTSSHGAFGAIAFGIGTSQVRDVLASQTLALSKLKVRKIEVNGNLNPGVYAKDVILHIIRTLGVKGGVGYGYEFAGTTFEQMNMEERMTVCNMAIEGGARCGYVNPDRVTYDYLKGRDFAPKGADWDKAVAWWDSIKSDVDAQYDDVVVFDAAEISPTVTWGITPGQGIGVNQSVPQPEELLEEDRFIAEEAYRYMDLYPGQPIKGTKIDVCFIGSCTNGRISDLREAAKIAKGRHVAEGIKAFVVPGSERVKQEAETEGLDKIFQEAGFEWREPGCSMCLAMNPDKLQGRQISASSSNRNFKGRQGSSSGRTLLMSPAMVATAAIKGEVSDVRELL.

Residues cysteine 347, cysteine 407, and cysteine 410 each coordinate [4Fe-4S] cluster. Over residues 422-442 (QISASSSNRNFKGRQGSSSGR) the composition is skewed to polar residues. The interval 422–443 (QISASSSNRNFKGRQGSSSGRT) is disordered.

It belongs to the aconitase/IPM isomerase family. LeuC type 1 subfamily. In terms of assembly, heterodimer of LeuC and LeuD. It depends on [4Fe-4S] cluster as a cofactor.

The enzyme catalyses (2R,3S)-3-isopropylmalate = (2S)-2-isopropylmalate. It functions in the pathway amino-acid biosynthesis; L-leucine biosynthesis; L-leucine from 3-methyl-2-oxobutanoate: step 2/4. In terms of biological role, catalyzes the isomerization between 2-isopropylmalate and 3-isopropylmalate, via the formation of 2-isopropylmaleate. The chain is 3-isopropylmalate dehydratase large subunit from Nostoc punctiforme (strain ATCC 29133 / PCC 73102).